Here is a 345-residue protein sequence, read N- to C-terminus: Anthranilate phosphoribosyltransferase (345 aa).

5-phospho-alpha-D-ribose 1-diphosphate-binding positions include G86, 89 to 90 (GD), T94, 96 to 99 (NIST), 114 to 122 (KHGNRNLSS), and A126. G86 contributes to the anthranilate binding site. Position 98 (S98) interacts with Mg(2+). N117 contacts anthranilate. R172 contributes to the anthranilate binding site. Positions 231 and 232 each coordinate Mg(2+).

It belongs to the anthranilate phosphoribosyltransferase family. Homodimer. Mg(2+) serves as cofactor.

It carries out the reaction N-(5-phospho-beta-D-ribosyl)anthranilate + diphosphate = 5-phospho-alpha-D-ribose 1-diphosphate + anthranilate. The protein operates within amino-acid biosynthesis; L-tryptophan biosynthesis; L-tryptophan from chorismate: step 2/5. Functionally, catalyzes the transfer of the phosphoribosyl group of 5-phosphorylribose-1-pyrophosphate (PRPP) to anthranilate to yield N-(5'-phosphoribosyl)-anthranilate (PRA). The polypeptide is Anthranilate phosphoribosyltransferase (Jannaschia sp. (strain CCS1)).